We begin with the raw amino-acid sequence, 94 residues long: C-C motif chemokine 26 (94 aa).

The N-terminal stretch at 1–23 is a signal peptide; that stretch reads MMGLSLASAVLLASLLSLHLGTA. 2 disulfides stabilise this stretch: cysteine 33–cysteine 57 and cysteine 34–cysteine 73.

The protein belongs to the intercrine beta (chemokine CC) family. As to quaternary structure, monomer. Ubiquitously expressed at low levels in various tissues including heart and ovary.

It localises to the secreted. Functionally, chemoattractant for eosinophils and basophils. Acts as a ligand for C-C chemokine receptor CCR3 which triggers Ca(2+) mobilization in eosinophils. Also acts as a ligand for CX3C chemokine receptor CX3CR1, inducing cell chemotaxis. The polypeptide is C-C motif chemokine 26 (Homo sapiens (Human)).